We begin with the raw amino-acid sequence, 575 residues long: MEMISNNLNWFVGVVEDRMDPLKLGRVRVRVVGLHPPQRAQGDVMGIPTEKLPWMSVIQPITSAAMSGIGGSVTGPVEGTRVYGHFLDKWKTNGIVLGTYGGIVREKPNRLEGFSDPTGQYPRRLGNDTNVLNQGGEVGYDSSSNVIQDSNLDTAINPDDRPLSEIPTDDNPNMSMAEMLRRDEGLRLKVYWDTEGYPTIGIGHLIMKQPVRDMAQINKVLSKQVGREITGNPGSITMEEATTLFERDLADMQRDIKSHSKVGPVWQAVNRSRQMALENMAFQMGVGGVAKFNTMLTAMLAGDWEKAYKAGRDSLWYQQTKGRASRVTMIILTGNLESYGVEVKTPARSLSAMAATVAKSSDPADPPIPNDSRILFKEPVSSYKGEYPYVHTMETESGHIQEFDDTPGQERYRLVHPTGTYEEVSPSGRRTRKTVDNLYDITNADGNFLVAGDKKTNVGGSEIYYNMDNRLHQIDGSNTIFVRGDETKTVEGNGTILVKGNVTIIVEGNADITVKGDATTLVEGNQTNTVNGNLSWKVAGTVDWDVGGDWTEKMASMSSISSGQYTIDGSRIDIG.

The tract at residues 150–174 (SNLDTAINPDDRPLSEIPTDDNPNM) is disordered. Glu-184 functions as the Proton donor in the catalytic mechanism. Asp-193 functions as the Nucleophile in the catalytic mechanism.

It belongs to the glycosyl hydrolase 24 family. As to quaternary structure, monomer. The central spike complex, which creates an extension of the tail tube, is made up of three copies of the gp27-gp5*-gp5C complex and one copy of gp5.4. Part of the baseplate macromolecular complex which consists of gp5*, gp5C, gp5.4, gp27 (central spike complex); gp6, gp25, gp53 (inner baseplate); gp7, gp8 (intermediate baseplate); gp9, gp10, gp11, gp12 (peripheral); gp48 and gp54 (proximal region of the tail tube). Homotrimer. The central spike complex, which creates an extension of the tail tube, is made up of three copies of the gp27-gp5*-gp5C complex and one copy of gp5.4. Part of the baseplate macromolecular complex which consists of gp5*, gp5C, gp5.4, gp27 (central spike complex); gp6, gp25, gp53 (inner baseplate); gp7, gp8 (intermediate baseplate); gp9, gp10, gp11, gp12 (peripheral); gp48 and gp54 (proximal region of the tail tube). In terms of assembly, homotrimer. In terms of processing, in the fully assembled virus, gp5 precursor is cleaved to form the mature tail lysozyme gp5*, and a C-terminus fragment, gp5C. The two fragments remain associated with the virion. The enzymatic activity of the precursor is about 10% of that of mature gp5*. PubMed:15342608 reported a cleavage at Val-390 but the cleavage has been mostly observed at Ser-351.

It is found in the virion. The enzyme catalyses Hydrolysis of (1-&gt;4)-beta-linkages between N-acetylmuramic acid and N-acetyl-D-glucosamine residues in a peptidoglycan and between N-acetyl-D-glucosamine residues in chitodextrins.. Its function is as follows. Baseplate central spike complex-associated lysozyme that is essential for the localized hydrolysis of bacterial cell wall, so that the tail tube, through which the phage DNA is ejected, can penetrate to the host inner membrane. The tail lysozyme complex at the tip of the tail tube penetrates through the outer membrane into the periplasm and during that process, gp5* dissociates from gp5C and activated. Due to the lower pH in the periplasm, gp5* would dissociate from gp27 which probably still binds to the tip of the tube. This way, lysozyme domain is released and locally digests the peptidoglycan layer to make a hole to let the tube penetrate to the inner membrane. Involved in the tail assembly. The sequence is that of Pre-baseplate central spike protein Gp5 from Escherichia coli (Bacteriophage T4).